We begin with the raw amino-acid sequence, 377 residues long: G-protein coupled receptor 54 (377 aa).

Topologically, residues 1 to 49 (MYSSEELWNSTEQVWINGSGTNFSLGRHEDDEEEEGDKHPFFTDAWLVP) are extracellular. 3 N-linked (GlcNAc...) asparagine glycosylation sites follow: N9, N17, and N22. A helical membrane pass occupies residues 50–70 (LFFSLIMLVGLVGNSLVIYVI). Residues 71 to 91 (SKHRQMRTATNFYIANLAATD) are Cytoplasmic-facing. A helical membrane pass occupies residues 92–112 (IIFLVCCVPFTATLYPLPGWI). Residues 113–119 (FGNFMCK) are Extracellular-facing. C118 and C198 are disulfide-bonded. The helical transmembrane segment at 120–140 (FVAFLQQVTVQATCITLTAMS) threads the bilayer. Residues 141–160 (GDRCYVTVYPLKSLRHRTPK) are Cytoplasmic-facing. Residues 161-181 (VAMIVSICIWIGSFVLSTPIL) form a helical membrane-spanning segment. Topologically, residues 182 to 209 (MYQRIEEGYWYGPRQYCMERFPSKTHER) are extracellular. A helical membrane pass occupies residues 210–230 (AFILYQFIAAYLLPVLTISFC). The Cytoplasmic segment spans residues 231–269 (YTLMVKRVGQPTVEPVDNNYQVNLLSERTISIRSKVSKM). A helical membrane pass occupies residues 270–290 (VVVIVLLFAICWGPIQIFVLF). The Extracellular portion of the chain corresponds to 291–305 (QSFYPNYQPNYATYK). The helical transmembrane segment at 306–328 (IKTWANCMSYANSSVNPIVYGFM) threads the bilayer. Residues 329–377 (GASFQKSFRKTFPFLFKHKVRDSSMASRTANAEIKFVAAEEGNNNNAVN) are Cytoplasmic-facing.

The protein belongs to the G-protein coupled receptor 1 family. As to expression, expressed in a significantly high percentage (45-60%) of mature GnRH1, GnRH2, and GnRH3 neurons and in immature GnRH3 neurons, which had migrated to the vicinity of their final locations in the brain. Only 5% of immature GnRH1 and GnRH2 neurons have receptor transcripts.

Its subcellular location is the cell membrane. Its function is as follows. Receptor speculated to be essential for sexual development. May regulate gonadotropin-releasing hormone (GnRH) secretion. The receptor expression could be a 'stop signal' for GnRH1, GnRH2, and GnRH3 neuronal migration, leading to suppression of cell growth and modulation of GnRH secretion, which is important for normal sexual development. This is G-protein coupled receptor 54 (gpr54) from Oreochromis niloticus (Nile tilapia).